The primary structure comprises 510 residues: MADTYVGAIDQGTTGTRFMVFDHSGQVVANAYEKHEQIYPEPGWVEHDPVEIWENTQEVVTKGLADAGVGAEQLEALGITNQRETTIVWDKETGKPVHNALVWQDRRTTDRVEEIQEEDKVEWIRGKTGLECDAYFSATKTEWILDNAEPLKMQSSRGADLRERAEDGELLMGTIDAWLIYKLTGNHITDVSNASRTMLYNIHDMEWDDELLEEFGVPESMVPEVRPSSDESLYGHTDADGFLKEEVPVAGALGDQQAALFGQTCFDKGDAKNTYGTGAFYLMNTGSEAVASDNGLLTTVGFQMSGEPVQYALEGSIFIAGAAIEWLEDVDLINNAAQTAELARSVESTDGVYMVPAFTGLGAPHWDGRARGTIVGMTRGTRKEHIVRATLESIAYQTRDLAEAMEEDSGVEMTTLRVDGGAVKNNFLCQLQSDIIQTDIARPQVDETTALGSAYAAGLAVGYWDTVDELRDNWQVDEEFSPEMDAGKADKMYARWDDAVDRSRDWAQEE.

T13 contacts ADP. Residues T13 and T14 each contribute to the ATP site. Residue T13 coordinates sn-glycerol 3-phosphate. R17 is an ADP binding site. Positions 83, 84, 135, and 255 each coordinate sn-glycerol 3-phosphate. Glycerol is bound by residues R83, E84, Y135, D255, and Q256. ADP is bound by residues T277, G321, G421, and N425. Positions 277, 321, and 421 each coordinate ATP.

The protein belongs to the FGGY kinase family.

The enzyme catalyses glycerol + ATP = sn-glycerol 3-phosphate + ADP + H(+). It participates in polyol metabolism; glycerol degradation via glycerol kinase pathway; sn-glycerol 3-phosphate from glycerol: step 1/1. Functionally, key enzyme in the regulation of glycerol uptake and metabolism. Catalyzes the phosphorylation of glycerol to yield sn-glycerol 3-phosphate. The chain is Glycerol kinase from Haloarcula marismortui (strain ATCC 43049 / DSM 3752 / JCM 8966 / VKM B-1809) (Halobacterium marismortui).